A 539-amino-acid chain; its full sequence is Glucans biosynthesis protein D (539 aa).

The tat-type signal signal peptide spans 1-29 (MNRRNLLKASMALAAYGSVSASGLYAARA).

This sequence belongs to the OpgD/OpgG family. Post-translationally, predicted to be exported by the Tat system. The position of the signal peptide cleavage has not been experimentally proven.

It localises to the periplasm. It participates in glycan metabolism; osmoregulated periplasmic glucan (OPG) biosynthesis. In terms of biological role, probably involved in the control of the structural glucose backbone of osmoregulated periplasmic glucans (OPGs). This chain is Glucans biosynthesis protein D, found in Pseudomonas savastanoi pv. phaseolicola (strain 1448A / Race 6) (Pseudomonas syringae pv. phaseolicola (strain 1448A / Race 6)).